Consider the following 414-residue polypeptide: Putative competence-damage inducible protein (414 aa).

The protein belongs to the CinA family.

This chain is Putative competence-damage inducible protein, found in Listeria monocytogenes serotype 4b (strain CLIP80459).